A 415-amino-acid chain; its full sequence is Serine hydroxymethyltransferase 2 (415 aa).

(6S)-5,6,7,8-tetrahydrofolate is bound by residues Leu121 and 125–127 (GHL). Lys229 bears the N6-(pyridoxal phosphate)lysine mark.

Belongs to the SHMT family. As to quaternary structure, homodimer. Pyridoxal 5'-phosphate serves as cofactor.

It is found in the cytoplasm. The catalysed reaction is (6R)-5,10-methylene-5,6,7,8-tetrahydrofolate + glycine + H2O = (6S)-5,6,7,8-tetrahydrofolate + L-serine. The protein operates within one-carbon metabolism; tetrahydrofolate interconversion. Its pathway is amino-acid biosynthesis; glycine biosynthesis; glycine from L-serine: step 1/1. In terms of biological role, catalyzes the reversible interconversion of serine and glycine with tetrahydrofolate (THF) serving as the one-carbon carrier. This reaction serves as the major source of one-carbon groups required for the biosynthesis of purines, thymidylate, methionine, and other important biomolecules. Also exhibits THF-independent aldolase activity toward beta-hydroxyamino acids, producing glycine and aldehydes, via a retro-aldol mechanism. This Bordetella bronchiseptica (strain ATCC BAA-588 / NCTC 13252 / RB50) (Alcaligenes bronchisepticus) protein is Serine hydroxymethyltransferase 2.